The following is a 279-amino-acid chain: Urease accessory protein UreD (279 aa).

It belongs to the UreD family. As to quaternary structure, ureD, UreF and UreG form a complex that acts as a GTP-hydrolysis-dependent molecular chaperone, activating the urease apoprotein by helping to assemble the nickel containing metallocenter of UreC. The UreE protein probably delivers the nickel.

It localises to the cytoplasm. Functionally, required for maturation of urease via the functional incorporation of the urease nickel metallocenter. This Nostoc sp. (strain PCC 7120 / SAG 25.82 / UTEX 2576) protein is Urease accessory protein UreD.